A 269-amino-acid chain; its full sequence is Ubiquinone/menaquinone biosynthesis C-methyltransferase UbiE (269 aa).

Residues Thr92, Asp113, and 141–142 (NA) contribute to the S-adenosyl-L-methionine site.

The protein belongs to the class I-like SAM-binding methyltransferase superfamily. MenG/UbiE family.

It carries out the reaction a 2-demethylmenaquinol + S-adenosyl-L-methionine = a menaquinol + S-adenosyl-L-homocysteine + H(+). The catalysed reaction is a 2-methoxy-6-(all-trans-polyprenyl)benzene-1,4-diol + S-adenosyl-L-methionine = a 5-methoxy-2-methyl-3-(all-trans-polyprenyl)benzene-1,4-diol + S-adenosyl-L-homocysteine + H(+). It participates in quinol/quinone metabolism; menaquinone biosynthesis; menaquinol from 1,4-dihydroxy-2-naphthoate: step 2/2. The protein operates within cofactor biosynthesis; ubiquinone biosynthesis. Its function is as follows. Methyltransferase required for the conversion of demethylmenaquinol (DMKH2) to menaquinol (MKH2) and the conversion of 2-polyprenyl-6-methoxy-1,4-benzoquinol (DDMQH2) to 2-polyprenyl-3-methyl-6-methoxy-1,4-benzoquinol (DMQH2). This Brucella suis biovar 1 (strain 1330) protein is Ubiquinone/menaquinone biosynthesis C-methyltransferase UbiE.